The chain runs to 218 residues: Histone H1 (218 aa).

Composition is skewed to low complexity over residues 1–19 and 27–39; these read MSET…GAKA and AAGG…PAGP. 2 disordered regions span residues 1 to 41 and 89 to 218; these read MSET…GPSV and VGKG…PKKK. Ser2 is modified (N-acetylserine). In terms of domain architecture, H15 spans 37-110; the sequence is AGPSVTELIT…GASGSFKLNK (74 aa). Basic residues-rich tracts occupy residues 119 to 133, 141 to 158, 166 to 184, and 191 to 218; these read ATKK…KPAA, KKPK…KAKK, KAAK…KKAA, and KAVK…PKKK.

It belongs to the histone H1/H5 family.

The protein resides in the nucleus. It is found in the chromosome. In terms of biological role, histones H1 are necessary for the condensation of nucleosome chains into higher-order structures. The chain is Histone H1 from Anas platyrhynchos (Mallard).